The following is a 630-amino-acid chain: MIYHEIYDVIVVGGGHAGTEAALAPARMGLKTLLLTHNIDTLGQMSCNPAIGGIGKGHLVKEIDAMGGLMAIAIDQAGIQFRTLNSSKGPAVRATRAQADRVLYRQAVRTALENQPNLDIFQQEVVDILVENNRAVGAVTKMRLTFKARSVVLTAGTFLAGKIHIGLDNYAGGRAGDPAATMLADRLRDLNLRIDRLKTGTPPRLDARTINFDVLAKQHGDAELPVMSFMGSVDLHPRQIPCYITHTNEQTHDLIRNSLDRSPMYTGVIEGIGPRYCPSIEDKVMRFSDRNSHQIYLEPEGLSTIEVYPNGISTSLPFDVQMGIVNSMKGLEKTRIIKPGYAIEYDYFDPRDLKPTLETKAIEGLFFAGQINGTTGYEEAAAQGLLAGINAALQVQGKEAWFPTRDLAYTGVLVDDLCTLGTKEPYRVFTSRAEYRLLLREDNADIRLTPIAHELGLIDDARWARFNQKMENIEREHERLKQIWIHPQSEHLAVVNELVNSPLTREASGEDLLRRPEVTYDKLTQVAAFAPALDDKQAAEQVEISIKYQGYIEHQQNEIERHKRHENTLIPAEFDYDKVESLSNEVRAKLMQHRPVSIGQASRISGITPAAISILLVNLKKQGMLKRGEL.

Residue 13 to 18 (GGGHAG) participates in FAD binding. Residue 273–287 (GPRYCPSIEDKVMRF) coordinates NAD(+).

It belongs to the MnmG family. Homodimer. Heterotetramer of two MnmE and two MnmG subunits. It depends on FAD as a cofactor.

The protein resides in the cytoplasm. Its function is as follows. NAD-binding protein involved in the addition of a carboxymethylaminomethyl (cmnm) group at the wobble position (U34) of certain tRNAs, forming tRNA-cmnm(5)s(2)U34. This chain is tRNA uridine 5-carboxymethylaminomethyl modification enzyme MnmG, found in Actinobacillus pleuropneumoniae serotype 7 (strain AP76).